The sequence spans 420 residues: Calsequestrin-1 (420 aa).

Residues 1–22 form the signal peptide; sequence MKGPWLVLAALCLSLANLGPRG. Asn338 carries an N-linked (GlcNAc...) asparagine glycan. Residues 369–420 form a disordered region; the sequence is LEGEVNTEDDDDDDDDDDDDDDDDDDDDDDDDDDDDDDDDDDDDDDDDDDDD.

Belongs to the calsequestrin family. In terms of assembly, monomer; increases in response to a depletion of intracellular calcium. Homodimer. Homotetramer and homopolymer. Can form linear homooligomers. Ca(2+) ions promote oligomerization. Detected in skeletal muscle (at protein level). Detected in skeletal muscle.

The protein resides in the endoplasmic reticulum. It localises to the sarcoplasmic reticulum. The protein localises to the sarcoplasmic reticulum lumen. It is found in the sarcoplasmic reticulum membrane. Its subcellular location is the mitochondrion matrix. Functionally, calsequestrin is a high-capacity, moderate affinity, calcium-binding protein and thus acts as an internal calcium store in muscle. Calcium ions are bound by clusters of acidic residues at the protein surface, often at the interface between subunits. Can bind around 80 Ca(2+) ions. Regulates the release of lumenal Ca(2+) via the calcium release channel RYR1; this plays an important role in triggering muscle contraction. Negatively regulates store-operated Ca(2+) entry (SOCE) activity. The protein is Calsequestrin-1 of Pelophylax lessonae (Pool frog).